A 361-amino-acid chain; its full sequence is Probable mannitol dehydrogenase (361 aa).

Residues Cys51, His73, Cys104, Cys107, Cys110, Cys118, and Cys167 each coordinate Zn(2+).

The protein belongs to the zinc-containing alcohol dehydrogenase family. Zn(2+) is required as a cofactor.

It carries out the reaction D-mannitol + NAD(+) = D-mannose + NADH + H(+). Oxidizes mannitol to mannose. Provides the initial step by which translocated mannitol is committed to central metabolism and, by regulating mannitol pool size, is important in regulating salt tolerance at the cellular level. The chain is Probable mannitol dehydrogenase (ELI3) from Mesembryanthemum crystallinum (Common ice plant).